The sequence spans 935 residues: Isoleucine--tRNA ligase (935 aa).

Positions 58-68 (PYANGSIHVGH) match the 'HIGH' region motif. Residue glutamate 558 participates in L-isoleucyl-5'-AMP binding. Residues 599 to 603 (KMSKS) carry the 'KMSKS' region motif. Lysine 602 lines the ATP pocket. Zn(2+)-binding residues include cysteine 897, cysteine 900, cysteine 917, and cysteine 920.

It belongs to the class-I aminoacyl-tRNA synthetase family. IleS type 1 subfamily. Monomer. The cofactor is Zn(2+).

It is found in the cytoplasm. The catalysed reaction is tRNA(Ile) + L-isoleucine + ATP = L-isoleucyl-tRNA(Ile) + AMP + diphosphate. Its function is as follows. Catalyzes the attachment of isoleucine to tRNA(Ile). As IleRS can inadvertently accommodate and process structurally similar amino acids such as valine, to avoid such errors it has two additional distinct tRNA(Ile)-dependent editing activities. One activity is designated as 'pretransfer' editing and involves the hydrolysis of activated Val-AMP. The other activity is designated 'posttransfer' editing and involves deacylation of mischarged Val-tRNA(Ile). The sequence is that of Isoleucine--tRNA ligase from Francisella philomiragia subsp. philomiragia (strain ATCC 25017 / CCUG 19701 / FSC 153 / O#319-036).